Reading from the N-terminus, the 540-residue chain is MAKILKFDEDARRALERGVNQLADTVKVTIGPKGRNVVIDKKFGAPTITNDGVTIAREVECDDPYENLGAQLVKEVATKTNDIAGDGTTTATVLAQALVREGLRNVAAGASPAALKKGIDAAVAAVSAELLDTARPIDDKSDIAAVAALSAQDKQVGELIAEAMDKVGKDGVITVEESNTFGVDLDFTEGMAFDKGYLSPYMVTDQERMEAVLDDPYILIHQGKIGSIQDLLPLLEKVIQAGGSKPLLIIAEDVEGEALSTLVVNKIRGTFNAVAVKAPGFGDRRKAMLGDMATLTGATVIAEEVGLKLDQAGLDVLGTARRVTVTKDDTTIVDGGGNAEDVQGRVAQIKAEIESTDSDWDREKLQERLAKLAGGVCVIRVGAATEVELKERKHRLEDAISATRAAVEEGIVSGGGSALVHAVKVLDDNLGRTGDEATGVAVVRRAAVEPLRWIAENAGLEGYVITTKVAELDKGQGFNAATGEYGDLVKAGVIDPVKVTRSALENAASIASLLLTTETLVVEKPAEEEPEAGHGHGHSH.

ATP contacts are provided by residues 29–32 (TIGP), 86–90 (DGTTT), Gly415, 479–481 (NAA), and Asp495.

This sequence belongs to the chaperonin (HSP60) family. Forms a cylinder of 14 subunits composed of two heptameric rings stacked back-to-back. Interacts with the co-chaperonin GroES.

It is found in the cytoplasm. It catalyses the reaction ATP + H2O + a folded polypeptide = ADP + phosphate + an unfolded polypeptide.. In terms of biological role, together with its co-chaperonin GroES, plays an essential role in assisting protein folding. The GroEL-GroES system forms a nano-cage that allows encapsulation of the non-native substrate proteins and provides a physical environment optimized to promote and accelerate protein folding. This is Chaperonin GroEL 1 from Streptomyces albus G.